The primary structure comprises 508 residues: Phytepsin (508 aa).

Residues Met1–Ala27 form the signal peptide. Residues Glu28–Arg66 constitute a propeptide, activation peptide. One can recognise a Peptidase A1 domain in the interval Tyr84–Ala505. The active site involves Asp102. 2 disulfides stabilise this stretch: Cys115–Cys121 and Cys280–Cys284. Residue Asp289 is part of the active site. Residues Val314–Pro419 form the Saposin B-type domain. Disulfide bonds link Cys319–Cys413, Cys344–Cys385, Cys350–Cys382, and Cys427–Cys464. A glycan (N-linked (GlcNAc...) asparagine) is linked at Asn399.

The protein belongs to the peptidase A1 family. In terms of assembly, heterodimer of two subunits (29 kDa and 11 kDa) processed from the precursor molecule. A large enzyme (32 kDa and 16 kDa) is an intermediate precursor form. In terms of tissue distribution, embryo and leaf.

It is found in the vacuole. It catalyses the reaction Prefers hydrophobic residues Phe, Val, Ile, Leu, and Ala at P1 and P1', but also cleaves -Phe-|-Asp- and -Asp-|-Asp- bonds in 2S albumin from plant seeds.. Its function is as follows. Involved in the breakdown of propeptides of storage proteins in protein-storage vacuoles. This is Phytepsin from Hordeum vulgare (Barley).